The chain runs to 225 residues: Protein LiaH (225 aa).

Coiled coils occupy residues 58 to 151 (KKYE…KEHM) and 161 to 182 (ESAY…IRAN).

This sequence belongs to the PspA/Vipp/IM30 family.

This Bacillus subtilis (strain 168) protein is Protein LiaH (liaH).